A 619-amino-acid polypeptide reads, in one-letter code: Guanylate cyclase soluble subunit beta-1 (619 aa).

Position 105 (His105) interacts with heme. Positions 421-554 (TILFSGIVGF…NTVNLTSRTE (134 aa)) constitute a Guanylate cyclase domain.

The protein belongs to the adenylyl cyclase class-4/guanylyl cyclase family. In terms of assembly, the active enzyme is formed by a heterodimer of an alpha and a beta subunit. Heterodimer with GUCY1A1. Can also form inactive homodimers in vitro. The cofactor is heme. In terms of tissue distribution, detected in brain cortex and cerebellum (at protein level).

Its subcellular location is the cytoplasm. The enzyme catalyses GTP = 3',5'-cyclic GMP + diphosphate. Activated by nitric oxide in the presence of magnesium or manganese ions. In terms of biological role, mediates responses to nitric oxide (NO) by catalyzing the biosynthesis of the signaling molecule cGMP. This is Guanylate cyclase soluble subunit beta-1 from Homo sapiens (Human).